A 336-amino-acid polypeptide reads, in one-letter code: tRNA N6-adenosine threonylcarbamoyltransferase (336 aa).

2 residues coordinate Fe cation: His-112 and His-116. Substrate contacts are provided by residues 136–140 (LVSGG), Asp-169, Gly-182, and Asn-276. Asp-304 is a Fe cation binding site.

The protein belongs to the KAE1 / TsaD family. The cofactor is Fe(2+).

It is found in the cytoplasm. It carries out the reaction L-threonylcarbamoyladenylate + adenosine(37) in tRNA = N(6)-L-threonylcarbamoyladenosine(37) in tRNA + AMP + H(+). Functionally, required for the formation of a threonylcarbamoyl group on adenosine at position 37 (t(6)A37) in tRNAs that read codons beginning with adenine. Is involved in the transfer of the threonylcarbamoyl moiety of threonylcarbamoyl-AMP (TC-AMP) to the N6 group of A37, together with TsaE and TsaB. TsaD likely plays a direct catalytic role in this reaction. The sequence is that of tRNA N6-adenosine threonylcarbamoyltransferase from Francisella philomiragia subsp. philomiragia (strain ATCC 25017 / CCUG 19701 / FSC 153 / O#319-036).